Here is a 184-residue protein sequence, read N- to C-terminus: Gremlin-1 (184 aa).

Residues M1–G24 form the signal peptide. Residues E23–S77 form a disordered region. An N-linked (GlcNAc...) asparagine glycan is attached at N42. 4 cysteine pairs are disulfide-bonded: C94/C144, C108/C158, C118/C176, and C122/C178. The 91-residue stretch at C94 to D184 folds into the CTCK domain.

This sequence belongs to the DAN family. In terms of assembly, homodimer; can also form homooligomers. Interacts with BMP2; can form higher oligomers with BMP2. Interacts with SLIT1 and SLIT2 in a glycosylation-dependent manner. As to expression, highly expressed in spleen and to a lesser extent in lung, skeletal muscle and kidney. Expressed only in non-transformed cells or primary fibroblasts in culture but not in established transformed or tumor derived cell lines. Broadly expressed in limb bud mesenchyme but restricted to the distal limb bud mesenchyme and concentrated posteriorly. Expressed in ovary especially in granulosa cells of follicles of type 4.

The protein resides in the secreted. In terms of biological role, cytokine that may play an important role during carcinogenesis and metanephric kidney organogenesis, as BMP a antagonist required for early limb outgrowth and patterning in maintaining the FGF4-SHH feedback loop. Down-regulates the BMP4 signaling in a dose-dependent manner. Antagonist of BMP2; inhibits BMP2-mediated differentiation of osteoblasts (in vitro). Acts as inhibitor of monocyte chemotaxis. In Mus musculus (Mouse), this protein is Gremlin-1 (Grem1).